Consider the following 681-residue polypeptide: SRSF protein kinase 2 (681 aa).

A disordered region spans residues 1–63 (MSVNSEKSSS…EQEDPADYCK (63 aa)). The segment covering 22–41 (LVPPPPPPPPPPPLPDPAPP) has biased composition (pro residues). Over residues 42–59 (EPEEEILGSDDEEQEDPA) the composition is skewed to acidic residues. Ser50 is modified (phosphoserine). In terms of domain architecture, Protein kinase spans 79–681 (YHVIRKLGWG…ECLRHPWLNS (603 aa)). ATP contacts are provided by residues 85 to 93 (LGWGHFSTV) and Lys108. The Proton acceptor role is filled by Asp212. Disordered regions lie at residues 237–270 (WQKA…KKKL), 302–452 (ENIT…PLFS), and 467–499 (GSPL…KTKT). Phosphothreonine is present on residues Thr331 and Thr332. Phosphoserine is present on Ser378. A compositionally biased stretch (acidic residues) spans 395–419 (QLEDEEDDEDDCANPEEYNLDEPNA). The segment covering 421–431 (SDYTYSSSYEQ) has biased composition (polar residues). Ser468 is modified (phosphoserine). At Thr471 the chain carries Phosphothreonine. A phosphoserine mark is found at Ser477, Ser479, and Ser483. Position 485 is a phosphothreonine; by PKB/AKT1 (Thr485). Ser487 and Ser490 each carry phosphoserine. Ser581 carries the post-translational modification Phosphoserine; by CK2.

Belongs to the protein kinase superfamily. CMGC Ser/Thr protein kinase family. Associates with U4/U6-U5 tri-small nuclear ribonucleoproteins (U4/U6-U5 tri-snRNPs). Interacts with PKB/AKT1 in a phosphorylation-dependent manner. The phosphorylated form (by PKB/AKT1) interacts with YWHAB and YWHAE. Interaction with YWHAB suppresses its cleavage by caspases and inhibits the release of its N-terminal pro-apoptotic fragment. Interacts with SFN. Interacts with ACIN1. Interacts with POLR2A/RNA polymerase II; the interaction occurs during the co-transcriptional formation of inappropriate R-loops. Mg(2+) serves as cofactor. In terms of processing, phosphorylation at Thr-485 by PKB/AKT1 enhances its stimulatory activity in triggering cyclin-D1 (CCND1) expression and promoting apoptosis in neurons, which can be blocked by YWHAB. It also enhances its protein kinase activity toward ACIN1 and SRSF2, promotes its nuclear translocation and prevents its proteolytic cleavage. Post-translationally, proteolytically cleaved at Asp-137 and Asp-401 by caspase-3 during apoptotic cell death. Cleavage at Asp-137 which is the major site of cleavage, produces a small N-terminal fragment that translocates into nucleus and promotes VP16-induced apoptosis. Expressed in testes, lung and brain.

It localises to the cytoplasm. Its subcellular location is the nucleus. It is found in the nucleoplasm. The protein resides in the nucleus speckle. The protein localises to the chromosome. The catalysed reaction is L-seryl-[protein] + ATP = O-phospho-L-seryl-[protein] + ADP + H(+). The enzyme catalyses L-threonyl-[protein] + ATP = O-phospho-L-threonyl-[protein] + ADP + H(+). Activated by phosphorylation on Ser-50 and Ser-581. Its function is as follows. Serine/arginine-rich protein-specific kinase which specifically phosphorylates its substrates at serine residues located in regions rich in arginine/serine dipeptides, known as RS domains and is involved in the phosphorylation of SR splicing factors and the regulation of splicing. Promotes neuronal apoptosis by up-regulating cyclin-D1 (CCND1) expression. This is done by the phosphorylation of SRSF2, leading to the suppression of p53/TP53 phosphorylation thereby relieving the repressive effect of p53/TP53 on cyclin-D1 (CCND1) expression. Phosphorylates ACIN1, and redistributes it from the nuclear speckles to the nucleoplasm, resulting in cyclin A1 but not cyclin A2 up-regulation. Plays an essential role in spliceosomal B complex formation via the phosphorylation of DDX23/PRP28. Probably by phosphorylating DDX23, leads to the suppression of incorrect R-loops formed during transcription; R-loops are composed of a DNA:RNA hybrid and the associated non-template single-stranded DNA. The sequence is that of SRSF protein kinase 2 from Mus musculus (Mouse).